Consider the following 485-residue polypeptide: tRNA sulfurtransferase (485 aa).

One can recognise a THUMP domain in the interval 61–165 (EELIALLQRI…DDKMMLVKAR (105 aa)). Residues 183 to 184 (LI), lysine 265, glycine 287, and glutamine 296 each bind ATP. A disulfide bridge links cysteine 344 with cysteine 456. One can recognise a Rhodanese domain in the interval 404-483 (LGENEVILDI…FSNVRVFAKN (80 aa)). Residue cysteine 456 is the Cysteine persulfide intermediate of the active site.

This sequence belongs to the ThiI family.

Its subcellular location is the cytoplasm. It catalyses the reaction [ThiI sulfur-carrier protein]-S-sulfanyl-L-cysteine + a uridine in tRNA + 2 reduced [2Fe-2S]-[ferredoxin] + ATP + H(+) = [ThiI sulfur-carrier protein]-L-cysteine + a 4-thiouridine in tRNA + 2 oxidized [2Fe-2S]-[ferredoxin] + AMP + diphosphate. It carries out the reaction [ThiS sulfur-carrier protein]-C-terminal Gly-Gly-AMP + S-sulfanyl-L-cysteinyl-[cysteine desulfurase] + AH2 = [ThiS sulfur-carrier protein]-C-terminal-Gly-aminoethanethioate + L-cysteinyl-[cysteine desulfurase] + A + AMP + 2 H(+). The protein operates within cofactor biosynthesis; thiamine diphosphate biosynthesis. Functionally, catalyzes the ATP-dependent transfer of a sulfur to tRNA to produce 4-thiouridine in position 8 of tRNAs, which functions as a near-UV photosensor. Also catalyzes the transfer of sulfur to the sulfur carrier protein ThiS, forming ThiS-thiocarboxylate. This is a step in the synthesis of thiazole, in the thiamine biosynthesis pathway. The sulfur is donated as persulfide by IscS. This Haemophilus influenzae (strain PittGG) protein is tRNA sulfurtransferase.